Here is a 349-residue protein sequence, read N- to C-terminus: Quinone oxidoreductase-like protein 1 (349 aa).

Belongs to the zinc-containing alcohol dehydrogenase family. Quinone oxidoreductase subfamily. As to quaternary structure, homodimer. Component of the FERRY complex composed of five subunits, TBCK, PPP1R21, FERRY3, CRYZL1 and GATD1 with a ratio of 1:2:1:2:4, respectively. Ubiquitous.

It localises to the early endosome. In terms of biological role, component of the FERRY complex (Five-subunit Endosomal Rab5 and RNA/ribosome intermediary). The FERRY complex directly interacts with mRNAs and RAB5A, and functions as a RAB5A effector involved in the localization and the distribution of specific mRNAs most likely by mediating their endosomal transport. The complex recruits mRNAs and ribosomes to early endosomes through direct mRNA-interaction. The sequence is that of Quinone oxidoreductase-like protein 1 (CRYZL1) from Homo sapiens (Human).